The sequence spans 198 residues: Glycerol-3-phosphate acyltransferase (198 aa).

Helical transmembrane passes span 3 to 23 (VEWL…AVIV), 81 to 101 (LFAA…FFQF), 113 to 133 (VLLG…IGVA), and 153 to 175 (YVWL…MLLV).

It belongs to the PlsY family. In terms of assembly, probably interacts with PlsX.

The protein localises to the cell inner membrane. The catalysed reaction is an acyl phosphate + sn-glycerol 3-phosphate = a 1-acyl-sn-glycero-3-phosphate + phosphate. The protein operates within lipid metabolism; phospholipid metabolism. Functionally, catalyzes the transfer of an acyl group from acyl-phosphate (acyl-PO(4)) to glycerol-3-phosphate (G3P) to form lysophosphatidic acid (LPA). This enzyme utilizes acyl-phosphate as fatty acyl donor, but not acyl-CoA or acyl-ACP. This chain is Glycerol-3-phosphate acyltransferase, found in Methylococcus capsulatus (strain ATCC 33009 / NCIMB 11132 / Bath).